The primary structure comprises 121 residues: Large ribosomal subunit protein uL18 (121 aa).

Belongs to the universal ribosomal protein uL18 family. In terms of assembly, part of the 50S ribosomal subunit; part of the 5S rRNA/L5/L18/L25 subcomplex. Contacts the 5S and 23S rRNAs.

Functionally, this is one of the proteins that bind and probably mediate the attachment of the 5S RNA into the large ribosomal subunit, where it forms part of the central protuberance. The chain is Large ribosomal subunit protein uL18 from Bdellovibrio bacteriovorus (strain ATCC 15356 / DSM 50701 / NCIMB 9529 / HD100).